A 354-amino-acid polypeptide reads, in one-letter code: MGCTLSAEERAALERSKAIEKNLKEDGISAAKDVKLLLLGAGESGKSTIVKQMKIIHEDGFSGEDVKQYKPVVYSNTIQSLAAIVRAMDTLGVEYGDKERKADSKMVCDVVSRMEDTEPFSAELLSAMMRLWGDSGIQECFNRSREYQLNDSAKYYLDSLDRIGAADYQPTEQDILRTRVKTTGIVETHFTFKNLHFRLFDVGGQRSERKKWIHCFEDVTAIIFCVALSGYDQVLHEDETTNRMHESLMLFDSICNNKFFIDTSIILFLNKKDLFGEKIKKSPLTICFPEYPGSNTYEDAAAYIQTQFESKNRSPNKEIYCHMTCATDTNNIQVVFDAVTDIIIANNLRGCGLY.

Residue glycine 2 is the site of N-myristoyl glycine attachment. A lipid anchor (S-palmitoyl cysteine) is attached at cysteine 3. The 323-residue stretch at 32-354 folds into the G-alpha domain; sequence KDVKLLLLGA…ANNLRGCGLY (323 aa). The interval 35–48 is G1 motif; the sequence is KLLLLGAGESGKST. Residues glutamate 43, lysine 46, serine 47, threonine 48, serine 152, leucine 176, arginine 177, threonine 178, and arginine 179 each coordinate GTP. Residue serine 47 coordinates Mg(2+). The interval 174–182 is G2 motif; sequence DILRTRVKT. Threonine 182 contributes to the Mg(2+) binding site. Residues 197–206 are G3 motif; that stretch reads FRLFDVGGQR. The residue at position 205 (glutamine 205) is a 5-glutamyl histamine. Residues 266-273 are G4 motif; that stretch reads ILFLNKKD. 3 residues coordinate GTP: asparagine 270, aspartate 273, and cysteine 325. Residues 324–329 are G5 motif; sequence TCATDT. Asparagine 346 bears the Deamidated asparagine; in form Alpha-3 mark. Cysteine 351 is lipidated: S-palmitoyl cysteine.

Belongs to the G-alpha family. G(i/o/t/z) subfamily. As to quaternary structure, g proteins are composed of 3 units; alpha, beta and gamma. The alpha chain contains the guanine nucleotide binding site. Forms a complex with GNB1 and GNG3. Interacts with RGS14. Interacts with RGS16. Interacts with RGS19. Interacts (when palmitoylated) with ADGRG3. Post-translationally, deamidation of Asn-346 converts alpha-1 to alpha-3. Histaminylated at Gln-205 residues by TGM2.

It is found in the cell membrane. Its subcellular location is the membrane. It carries out the reaction GTP + H2O = GDP + phosphate + H(+). With respect to regulation, the GTPase activity is promoted by GTPAse activators, such as RGS14, RGS16 and RGS19. Its function is as follows. Guanine nucleotide-binding proteins (G proteins) function as transducers downstream of G protein-coupled receptors (GPCRs) in numerous signaling cascades. The alpha chain contains the guanine nucleotide binding site and alternates between an active, GTP-bound state and an inactive, GDP-bound state. Signaling by an activated GPCR promotes GDP release and GTP binding. The alpha subunit has a low GTPase activity that converts bound GTP to GDP, thereby terminating the signal. Both GDP release and GTP hydrolysis are modulated by numerous regulatory proteins. Signaling is mediated via effector proteins, such as adenylate cyclase. Inhibits adenylate cyclase activity, leading to decreased intracellular cAMP levels. This chain is Guanine nucleotide-binding protein G(o) subunit alpha (GNAO1), found in Cricetulus longicaudatus (Long-tailed dwarf hamster).